A 910-amino-acid polypeptide reads, in one-letter code: Valine--tRNA ligase (910 aa).

A 'HIGH' region motif is present at residues 45–55 (PNVTGSLHMGH). Residues 554–558 (KMSKS) carry the 'KMSKS' region motif. Lysine 557 contributes to the ATP binding site. A coiled-coil region spans residues 842–910 (DLQAEAARLA…TAESRIRDAS (69 aa)).

This sequence belongs to the class-I aminoacyl-tRNA synthetase family. ValS type 1 subfamily. In terms of assembly, monomer.

It is found in the cytoplasm. It catalyses the reaction tRNA(Val) + L-valine + ATP = L-valyl-tRNA(Val) + AMP + diphosphate. Functionally, catalyzes the attachment of valine to tRNA(Val). As ValRS can inadvertently accommodate and process structurally similar amino acids such as threonine, to avoid such errors, it has a 'posttransfer' editing activity that hydrolyzes mischarged Thr-tRNA(Val) in a tRNA-dependent manner. This Brucella suis biovar 1 (strain 1330) protein is Valine--tRNA ligase.